Consider the following 182-residue polypeptide: MPVAALIREEIEIPGNVSVEVNGSEVVVKSGAKVLKRELAFPGIEIKMENEKVVVESTFPKKNQTAMVGTYRSHIQNMIKGVSEGFEYKLVIRYAHFPMKVTFKGNTVIIDNFLGEKYPRTAKVMEGVTVKVNGEEVIVSGTNKEFVGQTAANIEQATKVKGRDTRIFQDGIYIVEKAGKVL.

It belongs to the universal ribosomal protein uL6 family. As to quaternary structure, part of the 50S ribosomal subunit.

Functionally, this protein binds to the 23S rRNA, and is important in its secondary structure. It is located near the subunit interface in the base of the L7/L12 stalk, and near the tRNA binding site of the peptidyltransferase center. This chain is Large ribosomal subunit protein uL6, found in Methanococcus vannielii.